Reading from the N-terminus, the 430-residue chain is Enolase (430 aa).

Gln164 lines the (2R)-2-phosphoglycerate pocket. The Proton donor role is filled by Glu208. Residues Asp245, Glu288, and Asp315 each contribute to the Mg(2+) site. Positions 340, 369, 370, and 391 each coordinate (2R)-2-phosphoglycerate. Lys340 serves as the catalytic Proton acceptor.

This sequence belongs to the enolase family. The cofactor is Mg(2+).

The protein resides in the cytoplasm. Its subcellular location is the secreted. It localises to the cell surface. It catalyses the reaction (2R)-2-phosphoglycerate = phosphoenolpyruvate + H2O. The protein operates within carbohydrate degradation; glycolysis; pyruvate from D-glyceraldehyde 3-phosphate: step 4/5. Catalyzes the reversible conversion of 2-phosphoglycerate (2-PG) into phosphoenolpyruvate (PEP). It is essential for the degradation of carbohydrates via glycolysis. This Thermococcus onnurineus (strain NA1) protein is Enolase.